Reading from the N-terminus, the 557-residue chain is Potassium-transporting ATPase potassium-binding subunit (557 aa).

12 helical membrane passes run 5–25, 63–83, 132–152, 170–190, 253–273, 283–303, 329–349, 356–376, 379–399, 416–436, 484–504, and 526–546; these read GFLL…PLGS, LSAI…MLLG, GLTV…FALI, LLRI…LFFI, FVQM…FGEV, LLWA…WAEV, VLVS…AVIA, ALGG…FGGV, GLYG…LMIG, LTAL…ALAM, LLAF…MAIA, and LFVG…FIPA.

It belongs to the KdpA family. As to quaternary structure, the system is composed of three essential subunits: KdpA, KdpB and KdpC.

The protein localises to the cell inner membrane. In terms of biological role, part of the high-affinity ATP-driven potassium transport (or Kdp) system, which catalyzes the hydrolysis of ATP coupled with the electrogenic transport of potassium into the cytoplasm. This subunit binds the periplasmic potassium ions and delivers the ions to the membrane domain of KdpB through an intramembrane tunnel. This is Potassium-transporting ATPase potassium-binding subunit from Escherichia fergusonii (strain ATCC 35469 / DSM 13698 / CCUG 18766 / IAM 14443 / JCM 21226 / LMG 7866 / NBRC 102419 / NCTC 12128 / CDC 0568-73).